A 396-amino-acid polypeptide reads, in one-letter code: 1-deoxy-D-xylulose 5-phosphate reductoisomerase (396 aa).

5 residues coordinate NADPH: T13, G14, S15, I16, and N127. K128 lines the 1-deoxy-D-xylulose 5-phosphate pocket. E129 is a binding site for NADPH. Position 153 (D153) interacts with Mn(2+). S154, E155, S184, and H207 together coordinate 1-deoxy-D-xylulose 5-phosphate. Mn(2+) is bound at residue E155. G213 serves as a coordination point for NADPH. S220, N225, K226, and E229 together coordinate 1-deoxy-D-xylulose 5-phosphate. A Mn(2+)-binding site is contributed by E229.

Belongs to the DXR family. The cofactor is Mg(2+). Mn(2+) is required as a cofactor.

It carries out the reaction 2-C-methyl-D-erythritol 4-phosphate + NADP(+) = 1-deoxy-D-xylulose 5-phosphate + NADPH + H(+). It participates in isoprenoid biosynthesis; isopentenyl diphosphate biosynthesis via DXP pathway; isopentenyl diphosphate from 1-deoxy-D-xylulose 5-phosphate: step 1/6. In terms of biological role, catalyzes the NADPH-dependent rearrangement and reduction of 1-deoxy-D-xylulose-5-phosphate (DXP) to 2-C-methyl-D-erythritol 4-phosphate (MEP). This Stutzerimonas stutzeri (strain A1501) (Pseudomonas stutzeri) protein is 1-deoxy-D-xylulose 5-phosphate reductoisomerase.